The primary structure comprises 328 residues: PLASTID TRANSCRIPTIONALLY ACTIVE protein 6, chloroplastic (328 aa).

Residues Met-1–Ser-14 show a composition bias toward low complexity. The segment at Met-1–Tyr-21 is disordered. Residues Met-1–Asp-59 constitute a chloroplast transit peptide. The short motif at Arg-267–Leu-275 is the Nuclear localization signal element. The RNA binding domain signature appears at Glu-301 to Leu-319.

Subunit of the plastid-encoded RNA polymerase (PEP) complex. Component of a large nuclear subcomplex that may include other PEP subunits (e.g. PTAC12/HMR/PAP5, PTAC14/PAP7 and PTAC7/PAP12). Binds directly to PTAC12/HMR/PAP5 in the nucleus. Interacts with MTERF5. In terms of tissue distribution, mostly expressed in rosette leaves, stems and flowers, and, to a lower extent, in roots and cauline leaves.

The protein localises to the plastid. It localises to the chloroplast. Its subcellular location is the chloroplast thylakoid. The protein resides in the nucleus. It is found in the nucleoplasm. In terms of biological role, essential protein involved in plastid gene expression and in chloroplast biogenesis. Links photomorphogenesis and chloroplast biogenesis through its dual localization; required for the formation of late photobodies in the nucleus, as well as for phytochrome B-mediated signaling cascade and subsequent reshaping of the plastid-encoded RNA polymerase (PEP) activity. Binds RNA via specific recognition motifs of viral origin. Recruited by MTERF5 to the transcriptionally paused region of psbEFLJ. Promotes leaf greening. This chain is PLASTID TRANSCRIPTIONALLY ACTIVE protein 6, chloroplastic, found in Arabidopsis thaliana (Mouse-ear cress).